Consider the following 147-residue polypeptide: Endoribonuclease YbeY (147 aa).

Residues His-111, His-115, and Asp-121 each coordinate Zn(2+).

Belongs to the endoribonuclease YbeY family. It depends on Zn(2+) as a cofactor.

It localises to the cytoplasm. Its function is as follows. Single strand-specific metallo-endoribonuclease involved in late-stage 70S ribosome quality control and in maturation of the 3' terminus of the 16S rRNA. This is Endoribonuclease YbeY from Amoebophilus asiaticus (strain 5a2).